The sequence spans 394 residues: Phosphoglycerate kinase (394 aa).

Residues 21–23 (DFN), Arg36, 59–62 (HLGR), Arg118, and Arg151 contribute to the substrate site. At Ser183 the chain carries Phosphoserine. The ATP site is built by Lys201 and Gly292. The residue at position 299 (Thr299) is a Phosphothreonine. ATP-binding positions include Glu323 and 350–353 (GGDS).

The protein belongs to the phosphoglycerate kinase family. Monomer.

The protein resides in the cytoplasm. The enzyme catalyses (2R)-3-phosphoglycerate + ATP = (2R)-3-phospho-glyceroyl phosphate + ADP. It functions in the pathway carbohydrate degradation; glycolysis; pyruvate from D-glyceraldehyde 3-phosphate: step 2/5. This is Phosphoglycerate kinase from Anoxybacillus flavithermus (strain DSM 21510 / WK1).